Consider the following 223-residue polypeptide: Serine/threonine/tyrosine-interacting protein (223 aa).

The Tyrosine-protein phosphatase domain occupies 28–176; that stretch reads EMQEVLPGLF…LQEYEAIYLA (149 aa). An Interaction with FBXW7 motif is present at residues 76–78; sequence FQQ. Phosphoserine is present on residues serine 184 and serine 201. The interval 199–223 is disordered; the sequence is TGSVKRTHEEDDDFGNMQVATAQNG.

This sequence belongs to the protein-tyrosine phosphatase family. Non-receptor class subfamily. Interacts with MAPK1; independently of MAPK1 phosphorylation status. Interacts with CARHSP1/Crhsp-24. Interacts (via FQQ motif) with FBXW7 (via F-box domain); the interaction is direct and prevents FBXW7 interaction with SKP1, a component of the SCF(FBXW7) complex. Widely expressed with highest levels in muscle, testis and brain. In testis, expression starts 13-14 days after birth and is limited to the seminiferous tubule and to round and elongating spermatids. Expression is low in condensing spermatids and pachytene spermatocytes, and absent in spermatogonia, spermatozoa and somatic Sertoli cells.

It localises to the nucleus. Its subcellular location is the cytoplasm. It is found in the cytosol. In terms of biological role, catalytically inactive phosphatase. Acts as a nuclear anchor for MAPK1/MAPK3 (ERK1/ERK2). Modulates cell-fate decisions and cell migration by spatiotemporal regulation of MAPK1/MAPK3 (ERK1/ERK2). By binding to the F-box of FBXW7, prevents the assembly of FBXW7 into the SCF E3 ubiquitin-protein ligase complex, and thereby inhibits degradation of its substrates. Plays a role in spermatogenesis. The chain is Serine/threonine/tyrosine-interacting protein from Mus musculus (Mouse).